A 551-amino-acid chain; its full sequence is Arginine--tRNA ligase (551 aa).

A 'HIGH' region motif is present at residues 123-133 (ANPTGPLTIGR).

It belongs to the class-I aminoacyl-tRNA synthetase family. In terms of assembly, monomer.

The protein resides in the cytoplasm. The enzyme catalyses tRNA(Arg) + L-arginine + ATP = L-arginyl-tRNA(Arg) + AMP + diphosphate. This chain is Arginine--tRNA ligase, found in Chlorobium limicola (strain DSM 245 / NBRC 103803 / 6330).